The sequence spans 428 residues: Serine--tRNA ligase (428 aa).

233-235 lines the L-serine pocket; sequence TAE. Residue 264–266 participates in ATP binding; the sequence is RRE. Glutamate 287 provides a ligand contact to L-serine. 351-354 lines the ATP pocket; it reads EVSS. An L-serine-binding site is contributed by serine 387.

Belongs to the class-II aminoacyl-tRNA synthetase family. Type-1 seryl-tRNA synthetase subfamily. As to quaternary structure, homodimer. The tRNA molecule binds across the dimer.

It is found in the cytoplasm. The catalysed reaction is tRNA(Ser) + L-serine + ATP = L-seryl-tRNA(Ser) + AMP + diphosphate + H(+). It catalyses the reaction tRNA(Sec) + L-serine + ATP = L-seryl-tRNA(Sec) + AMP + diphosphate + H(+). It functions in the pathway aminoacyl-tRNA biosynthesis; selenocysteinyl-tRNA(Sec) biosynthesis; L-seryl-tRNA(Sec) from L-serine and tRNA(Sec): step 1/1. Catalyzes the attachment of serine to tRNA(Ser). Is also able to aminoacylate tRNA(Sec) with serine, to form the misacylated tRNA L-seryl-tRNA(Sec), which will be further converted into selenocysteinyl-tRNA(Sec). This chain is Serine--tRNA ligase, found in Salinibacter ruber (strain DSM 13855 / M31).